The chain runs to 812 residues: Xaa-Pro dipeptidyl-peptidase (812 aa).

Active-site charge relay system residues include Ser372, Asp492, and His523.

Belongs to the peptidase S15 family. As to quaternary structure, homodimer.

It localises to the cytoplasm. It carries out the reaction Hydrolyzes Xaa-Pro-|- bonds to release unblocked, N-terminal dipeptides from substrates including Ala-Pro-|-p-nitroanilide and (sequentially) Tyr-Pro-|-Phe-Pro-|-Gly-Pro-|-Ile.. Removes N-terminal dipeptides sequentially from polypeptides having unsubstituted N-termini provided that the penultimate residue is proline. This Pediococcus pentosaceus (strain ATCC 25745 / CCUG 21536 / LMG 10740 / 183-1w) protein is Xaa-Pro dipeptidyl-peptidase.